Here is a 249-residue protein sequence, read N- to C-terminus: Cytochrome c oxidase subunit 2 (249 aa).

Positions 1 to 13 are cleaved as a signal peptide; sequence MLNLFQIMNMINN. Residues 14–40 are Mitochondrial intermembrane-facing; sequence DVPTPYGFYFQDSATPNQEGILELHDN. The helical transmembrane segment at 41–62 threads the bilayer; sequence IMFYLVVILGLVSWMLFTIVRT. The Mitochondrial matrix portion of the chain corresponds to 63-80; the sequence is YSRNPMAYKYIKHGQTIE. The chain crosses the membrane as a helical span at residues 81–105; sequence IIWKIFPAVILLTIAFPSFILLYLC. The Mitochondrial intermembrane portion of the chain corresponds to 106–249; that stretch reads DEVISPAMTI…PKFLEWLNEQ (144 aa). Residues H184, C219, E221, C223, H227, and M230 each coordinate Cu cation. E221 contributes to the Mg(2+) binding site.

The protein belongs to the cytochrome c oxidase subunit 2 family. Component of the cytochrome c oxidase (complex IV, CIV), a multisubunit enzyme composed of a catalytic core of 3 subunits and several supernumerary subunits. The complex exists as a monomer or a dimer and forms supercomplexes (SCs) in the inner mitochondrial membrane with ubiquinol-cytochrome c oxidoreductase (cytochrome b-c1 complex, complex III, CIII). Cu cation is required as a cofactor. In terms of processing, the signal sequence of COX2 is processed by IMP1.

The protein localises to the mitochondrion inner membrane. The catalysed reaction is 4 Fe(II)-[cytochrome c] + O2 + 8 H(+)(in) = 4 Fe(III)-[cytochrome c] + 2 H2O + 4 H(+)(out). Its function is as follows. Component of the cytochrome c oxidase, the last enzyme in the mitochondrial electron transport chain which drives oxidative phosphorylation. The respiratory chain contains 3 multisubunit complexes succinate dehydrogenase (complex II, CII), ubiquinol-cytochrome c oxidoreductase (cytochrome b-c1 complex, complex III, CIII) and cytochrome c oxidase (complex IV, CIV), that cooperate to transfer electrons derived from NADH and succinate to molecular oxygen, creating an electrochemical gradient over the inner membrane that drives transmembrane transport and the ATP synthase. Cytochrome c oxidase is the component of the respiratory chain that catalyzes the reduction of oxygen to water. Electrons originating from reduced cytochrome c in the intermembrane space (IMS) are transferred via the dinuclear copper A center (CU(A)) of subunit 2 and heme A of subunit 1 to the active site in subunit 1, a binuclear center (BNC) formed by heme A3 and copper B (CU(B)). The BNC reduces molecular oxygen to 2 water molecules using 4 electrons from cytochrome c in the IMS and 4 protons from the mitochondrial matrix. This Maudiozyma exigua (Yeast) protein is Cytochrome c oxidase subunit 2 (COX2).